An 841-amino-acid chain; its full sequence is Rho guanine nucleotide exchange factor 15 (841 aa).

3 disordered regions span residues 1–179 (MSAQ…QARA), 239–261 (RRAS…HPAV), and 279–333 (KPPK…REEE). Over residues 39-53 (NGSSPQELPRNSNDA) the composition is skewed to polar residues. The span at 65–110 (PPAASLKPPALLPPSASRASLDSQTSPDSPSSTPTPSPVSRRSASP) shows a compositional bias: low complexity. A phosphoserine mark is found at Ser-107 and Ser-109. A compositionally biased stretch (pro residues) spans 111-124 (EPAPRSPVPPPKPS). At Tyr-353 the chain carries Phosphotyrosine; by EPHB2. The 185-residue stretch at 417–601 (RMQESLFEVV…SKIIERCSAE (185 aa)) folds into the DH domain. Positions 765–793 (ESSAPAKTEGRSLESRAAPKHLHKTPEGW) are disordered.

In terms of assembly, interacts with EPHB2. Interacts with EPHA4. Phosphorylated on tyrosine residues upon EFNA1 stimulation. EPHB2-dependent phosphorylation at Tyr-353 triggers UBE3A-mediated ubiquitination. Post-translationally, ubiquitinated; UBE3A-mediated ubiquitination and degradation by the proteasome promotes EFNB1-dependent synapse formation. In terms of tissue distribution, expressed in the vascular smooth muscle of coronary artery.

The protein localises to the cell projection. The protein resides in the dendrite. Functionally, specific GEF for RhoA activation. Does not activate RAC1 or CDC42. Regulates vascular smooth muscle contractility. Negatively regulates excitatory synapse development by suppressing the synapse-promoting activity of EPHB2. The sequence is that of Rho guanine nucleotide exchange factor 15 (ARHGEF15) from Homo sapiens (Human).